The primary structure comprises 402 residues: tRNA(Met) cytidine acetate ligase (402 aa).

ATP is bound by residues Ile-7 to His-20, Gly-102, Asn-171, and Arg-196.

The protein belongs to the TmcAL family.

It is found in the cytoplasm. The enzyme catalyses cytidine(34) in elongator tRNA(Met) + acetate + ATP = N(4)-acetylcytidine(34) in elongator tRNA(Met) + AMP + diphosphate. In terms of biological role, catalyzes the formation of N(4)-acetylcytidine (ac(4)C) at the wobble position of elongator tRNA(Met), using acetate and ATP as substrates. First activates an acetate ion to form acetyladenylate (Ac-AMP) and then transfers the acetyl group to tRNA to form ac(4)C34. This Clostridium perfringens (strain ATCC 13124 / DSM 756 / JCM 1290 / NCIMB 6125 / NCTC 8237 / Type A) protein is tRNA(Met) cytidine acetate ligase.